Consider the following 328-residue polypeptide: Malate dehydrogenase (328 aa).

13–19 (GGTGQIA) lines the NAD(+) pocket. Substrate-binding residues include arginine 94 and arginine 100. NAD(+) contacts are provided by residues asparagine 107, glutamine 114, and 131–133 (VGN). Positions 133 and 164 each coordinate substrate. Catalysis depends on histidine 189, which acts as the Proton acceptor.

The protein belongs to the LDH/MDH superfamily. MDH type 2 family.

The enzyme catalyses (S)-malate + NAD(+) = oxaloacetate + NADH + H(+). In terms of biological role, catalyzes the reversible oxidation of malate to oxaloacetate. The polypeptide is Malate dehydrogenase (Chlamydia felis (strain Fe/C-56) (Chlamydophila felis)).